The chain runs to 453 residues: Mogroside IIIx synthase (453 aa).

The active-site Proton acceptor is H21. D122 serves as the catalytic Charge relay. UDP-alpha-D-glucose-binding residues include S273, Q336, W354, N355, S356, E359, D375, and Q376.

It belongs to the UDP-glycosyltransferase family. In terms of tissue distribution, highly expressed in mature fruits.

The enzyme catalyses mogroside IIE + UDP-alpha-D-glucose = mogroside IIIX + UDP + H(+). It catalyses the reaction mogroside III + UDP-alpha-D-glucose = mogroside IV + UDP + H(+). The catalysed reaction is mogroside III + UDP-alpha-D-glucose = siamenoside I + UDP + H(+). It carries out the reaction mogroside IV + UDP-alpha-D-glucose = mogroside V + UDP + H(+). The protein operates within secondary metabolite biosynthesis; terpenoid biosynthesis. UDP-glycosyltransferase involved in the biosynthesis of cucurbitacin and mogroside tetracyclic triterpene natural products (e.g. siamenoside I and mogrosides IV, V and VI). Cucurbitacins have cytotoxic properties and exhibit deterrent taste as a defense barrier against herbivores. Mogrosides are nonsugar highly oxygenated compounds used as high-intensity zero-calorie sweeteners; they also possess pharmacological properties such as regulating immunity, lowering blood sugar and lipid levels, protecting the liver, and acting as antioxidants and antitumor agents. Catalyzes the branched glucosylations of mogroside II-E, mogroside III and mogroside IV. The polypeptide is Mogroside IIIx synthase (Siraitia grosvenorii (Monk's fruit)).